The following is a 190-amino-acid chain: Surfactant protein C (190 aa).

Residues 1–24 (MDVGSKEVLMESPPDYTAVPGGRL) constitute a propeptide that is removed on maturation. S-palmitoyl cysteine attachment occurs at residues Cys-28 and Cys-29. Positions 59 to 190 (HMSQKHTEMV…LCGEVPLYYT (132 aa)) are excised as a propeptide. In terms of domain architecture, BRICHOS spans 94–190 (FSIGSTGTVV…LCGEVPLYYT (97 aa)). A disulfide bridge connects residues Cys-121 and Cys-182.

Its subcellular location is the secreted. It is found in the extracellular space. It localises to the surface film. Its function is as follows. Pulmonary surfactant associated proteins promote alveolar stability by lowering the surface tension at the air-liquid interface in the peripheral air spaces. This Bos taurus (Bovine) protein is Surfactant protein C (SFTPC).